Consider the following 67-residue polypeptide: Brevinin-1CDYc (67 aa).

The first 22 residues, 1-22 (MFTLKKSLLLIFFLGTINLSLC), serve as a signal peptide directing secretion. The propeptide occupies 23 to 45 (EEERNADEEERRDDPEERDVEVE). A disulfide bond links C61 and C67.

It belongs to the frog skin active peptide (FSAP) family. Brevinin subfamily. As to expression, expressed by the skin glands.

It localises to the secreted. Antimicrobial peptide. The sequence is that of Brevinin-1CDYc from Rana huanrensis (Huanren frog).